We begin with the raw amino-acid sequence, 529 residues long: Bifunctional purine biosynthesis protein PurH (529 aa).

The MGS-like domain maps to 1–148 (MQQRRPVRRA…KNHKDVAIVV (148 aa)).

Belongs to the PurH family.

It carries out the reaction (6R)-10-formyltetrahydrofolate + 5-amino-1-(5-phospho-beta-D-ribosyl)imidazole-4-carboxamide = 5-formamido-1-(5-phospho-D-ribosyl)imidazole-4-carboxamide + (6S)-5,6,7,8-tetrahydrofolate. The catalysed reaction is IMP + H2O = 5-formamido-1-(5-phospho-D-ribosyl)imidazole-4-carboxamide. It functions in the pathway purine metabolism; IMP biosynthesis via de novo pathway; 5-formamido-1-(5-phospho-D-ribosyl)imidazole-4-carboxamide from 5-amino-1-(5-phospho-D-ribosyl)imidazole-4-carboxamide (10-formyl THF route): step 1/1. It participates in purine metabolism; IMP biosynthesis via de novo pathway; IMP from 5-formamido-1-(5-phospho-D-ribosyl)imidazole-4-carboxamide: step 1/1. This Klebsiella pneumoniae subsp. pneumoniae (strain ATCC 700721 / MGH 78578) protein is Bifunctional purine biosynthesis protein PurH.